We begin with the raw amino-acid sequence, 347 residues long: 3-methyl-2-oxobutanoate hydroxymethyltransferase 1, mitochondrial (347 aa).

Residues 1–48 (MASSLTRNCSRFSKAISVRFMSNLPENTVYGGPKPQNPNQRVTLTHLR) constitute a mitochondrion transit peptide. The Mg(2+) site is built by aspartate 83 and aspartate 122. Residues 83-84 (DS), aspartate 122, and lysine 152 each bind 3-methyl-2-oxobutanoate. A Mg(2+)-binding site is contributed by glutamate 154. The Proton acceptor role is filled by glutamate 222.

It belongs to the PanB family. Mg(2+) is required as a cofactor.

It localises to the mitochondrion. It catalyses the reaction 3-methyl-2-oxobutanoate + (6R)-5,10-methylene-5,6,7,8-tetrahydrofolate + H2O = 2-dehydropantoate + (6S)-5,6,7,8-tetrahydrofolate. The protein operates within cofactor biosynthesis; (R)-pantothenate biosynthesis; (R)-pantoate from 3-methyl-2-oxobutanoate: step 1/2. In terms of biological role, catalyzes the reversible reaction in which hydroxymethyl group from 5,10-methylenetetrahydrofolate is transferred onto alpha-ketoisovalerate to form ketopantoate. In Arabidopsis thaliana (Mouse-ear cress), this protein is 3-methyl-2-oxobutanoate hydroxymethyltransferase 1, mitochondrial (KPHMT1).